A 164-amino-acid chain; its full sequence is Peptide deformylase-like (164 aa).

The active site involves glutamate 134.

The protein belongs to the polypeptide deformylase family.

The sequence is that of Peptide deformylase-like from Brucella melitensis biotype 1 (strain ATCC 23456 / CCUG 17765 / NCTC 10094 / 16M).